The sequence spans 195 residues: HTH-type transcriptional regulator BetI (195 aa).

In terms of domain architecture, HTH tetR-type spans 8-68 (EIRRAQLIDA…ATMRHVLRDL (61 aa)). Residues 31–50 (TLASVAQRANISTGIVSHYF) constitute a DNA-binding region (H-T-H motif).

The protein operates within amine and polyamine biosynthesis; betaine biosynthesis via choline pathway [regulation]. Repressor involved in the biosynthesis of the osmoprotectant glycine betaine. It represses transcription of the choline transporter BetT and the genes of BetAB involved in the synthesis of glycine betaine. This Burkholderia mallei (strain NCTC 10247) protein is HTH-type transcriptional regulator BetI.